A 294-amino-acid polypeptide reads, in one-letter code: MSWLEKIFNTSNIVSSRKASIPEGVWTKCTSCEQVLYSAELERNLEVCPKCDHHMRMKARKRLETFLDAEGRVEIGAELEPKDVLKFKDSKRYKDRISAAQKSSDETDALVVMKGTLLELPVVACAFEFSFMGGSMGSVVGARFVKAVDAAIENNCPLVCFSASGGARMQEALMSLMQMAKTSAALARLSRKGLPFFSVLTDPTMGGVSASLAMLGDINIGEPKALIGFAGRRVIEQTVREDLPEGFQRSEFLLEHGAIDMIVDRREMRQRIGGLMAKMTNQESPLVVPVDGSH.

The 270-residue stretch at 25–294 (VWTKCTSCEQ…PLVVPVDGSH (270 aa)) folds into the CoA carboxyltransferase N-terminal domain. Zn(2+) is bound by residues Cys29, Cys32, Cys48, and Cys51. A C4-type zinc finger spans residues 29–51 (CTSCEQVLYSAELERNLEVCPKC).

Belongs to the AccD/PCCB family. In terms of assembly, acetyl-CoA carboxylase is a heterohexamer composed of biotin carboxyl carrier protein (AccB), biotin carboxylase (AccC) and two subunits each of ACCase subunit alpha (AccA) and ACCase subunit beta (AccD). Requires Zn(2+) as cofactor.

Its subcellular location is the cytoplasm. The enzyme catalyses N(6)-carboxybiotinyl-L-lysyl-[protein] + acetyl-CoA = N(6)-biotinyl-L-lysyl-[protein] + malonyl-CoA. The protein operates within lipid metabolism; malonyl-CoA biosynthesis; malonyl-CoA from acetyl-CoA: step 1/1. In terms of biological role, component of the acetyl coenzyme A carboxylase (ACC) complex. Biotin carboxylase (BC) catalyzes the carboxylation of biotin on its carrier protein (BCCP) and then the CO(2) group is transferred by the transcarboxylase to acetyl-CoA to form malonyl-CoA. The sequence is that of Acetyl-coenzyme A carboxylase carboxyl transferase subunit beta from Aliivibrio fischeri (strain MJ11) (Vibrio fischeri).